The sequence spans 428 residues: Succinyl-CoA--L-malate CoA-transferase alpha subunit (428 aa).

The disordered stretch occupies residues 1–31 (MPPTGEEPSGHAESKPPASDPMSTPGTGQEQ). Over residues 21-31 (PMSTPGTGQEQ) the composition is skewed to polar residues. Asp200 functions as the Nucleophile in the catalytic mechanism.

Belongs to the CoA-transferase III family. As to quaternary structure, forms a large complex composed of six heterodimers (alpha, beta).

It carries out the reaction succinyl-CoA + (S)-malate = (S)-malyl-CoA + succinate. It catalyses the reaction (3S)-citramalate + succinyl-CoA = (3S)-citramalyl-CoA + succinate. Involved in the 3-hydroxypropionate cycle used for autotrophic carbon dioxide fixation. Catalyzes the transfer of CoA moiety from succinyl-CoA to L-malate to yield L-malyl-CoA. It is highly specific for succinyl-CoA as the CoA donor, however it can accept L-citramalate instead of L-malate as the CoA acceptor. The protein is Succinyl-CoA--L-malate CoA-transferase alpha subunit (smtA) of Chloroflexus aurantiacus.